A 514-amino-acid chain; its full sequence is tRNA-2-methylthio-N(6)-dimethylallyladenosine synthase (514 aa).

The segment at 1-21 (MNEEQRKASSVDVLAERDKKA) is disordered. In terms of domain architecture, MTTase N-terminal spans 68 to 186 (RTFLIKTYGC…LPEILEEAYL (119 aa)). Cys-77, Cys-113, Cys-147, Cys-223, Cys-227, and Cys-230 together coordinate [4Fe-4S] cluster. The Radical SAM core domain maps to 209 to 440 (REGNIKAWVN…KKVGHYSQIA (232 aa)). The TRAM domain occupies 442–505 (SKYEGQTVTV…QYSLNGSFVK (64 aa)).

The protein belongs to the methylthiotransferase family. MiaB subfamily. Monomer. The cofactor is [4Fe-4S] cluster.

The protein resides in the cytoplasm. It catalyses the reaction N(6)-dimethylallyladenosine(37) in tRNA + (sulfur carrier)-SH + AH2 + 2 S-adenosyl-L-methionine = 2-methylsulfanyl-N(6)-dimethylallyladenosine(37) in tRNA + (sulfur carrier)-H + 5'-deoxyadenosine + L-methionine + A + S-adenosyl-L-homocysteine + 2 H(+). Functionally, catalyzes the methylthiolation of N6-(dimethylallyl)adenosine (i(6)A), leading to the formation of 2-methylthio-N6-(dimethylallyl)adenosine (ms(2)i(6)A) at position 37 in tRNAs that read codons beginning with uridine. The sequence is that of tRNA-2-methylthio-N(6)-dimethylallyladenosine synthase from Staphylococcus aureus (strain MRSA252).